The chain runs to 642 residues: DNA polymerase III subunit tau (642 aa).

45 to 52 provides a ligand contact to ATP; it reads GTRGVGKT. C64, C73, C76, and C79 together coordinate Zn(2+). A disordered region spans residues 385–441; that stretch reads TPPQLQQPSAPAPQTSPAPLPASTSQVLAARNQLQRAQGVTKTKKSEPAAASRARPV. Positions 394-404 are enriched in pro residues; sequence APAPQTSPAPL. Over residues 416 to 425 the composition is skewed to polar residues; the sequence is NQLQRAQGVT.

It belongs to the DnaX/STICHEL family. The DNA polymerase holoenzyme is a complex that contains 10 different types of subunits. These subunits are organized into 3 functionally essential subassemblies: the pol III core, the beta sliding clamp processivity factor and the clamp-loading complex. The pol III core (subunits alpha, epsilon and theta) contains the polymerase and the 3'-5' exonuclease proofreading activities. The polymerase is tethered to the template via the sliding clamp processivity factor. The clamp-loading complex assembles the beta processivity factor onto the primer template and plays a central role in the organization and communication at the replication fork. This complex contains delta, delta', psi and chi, and copies of either or both of two different DnaX proteins, gamma and tau. The composition of the holoenzyme is, therefore: (alpha,epsilon,theta)[2]-(isoform:gamma/tau)[3]-delta,delta', psi,chi-beta[4].

The catalysed reaction is DNA(n) + a 2'-deoxyribonucleoside 5'-triphosphate = DNA(n+1) + diphosphate. Functionally, DNA polymerase III is a complex, multichain enzyme responsible for most of the replicative synthesis in bacteria. This DNA polymerase also exhibits 3' to 5' exonuclease activity. In terms of biological role, serves as a scaffold to help in the dimerization of the core complex. Its function is as follows. Seems to interact with the delta subunit to transfer the beta subunit on the DNA. In Salmonella typhimurium (strain LT2 / SGSC1412 / ATCC 700720), this protein is DNA polymerase III subunit tau (dnaX).